The chain runs to 181 residues: Acireductone dioxygenase (181 aa).

Positions 91, 93, 97, and 136 each coordinate Fe(2+). Residues histidine 91, histidine 93, glutamate 97, and histidine 136 each coordinate Ni(2+).

It belongs to the acireductone dioxygenase (ARD) family. In terms of assembly, monomer. Interacts with MMP14. Fe(2+) serves as cofactor. It depends on Ni(2+) as a cofactor.

Its subcellular location is the cytoplasm. The protein localises to the nucleus. It is found in the cell membrane. It carries out the reaction 1,2-dihydroxy-5-(methylsulfanyl)pent-1-en-3-one + O2 = 4-methylsulfanyl-2-oxobutanoate + formate + 2 H(+). The enzyme catalyses 1,2-dihydroxy-5-(methylsulfanyl)pent-1-en-3-one + O2 = 3-(methylsulfanyl)propanoate + CO + formate + 2 H(+). It participates in amino-acid biosynthesis; L-methionine biosynthesis via salvage pathway; L-methionine from S-methyl-5-thio-alpha-D-ribose 1-phosphate: step 5/6. In terms of biological role, catalyzes 2 different reactions between oxygen and the acireductone 1,2-dihydroxy-3-keto-5-methylthiopentene (DHK-MTPene) depending upon the metal bound in the active site. Fe-containing acireductone dioxygenase (Fe-ARD) produces formate and 2-keto-4-methylthiobutyrate (KMTB), the alpha-ketoacid precursor of methionine in the methionine recycle pathway. Ni-containing acireductone dioxygenase (Ni-ARD) produces methylthiopropionate, carbon monoxide and formate, and does not lie on the methionine recycle pathway. The sequence is that of Acireductone dioxygenase (adi1) from Danio rerio (Zebrafish).